An 847-amino-acid chain; its full sequence is Leucine--tRNA ligase (847 aa).

A 'HIGH' region motif is present at residues 41-51 (PYPSGRIHMGH). The short motif at 619 to 623 (KMSKS) is the 'KMSKS' region element. K622 contacts ATP.

Belongs to the class-I aminoacyl-tRNA synthetase family.

It is found in the cytoplasm. The catalysed reaction is tRNA(Leu) + L-leucine + ATP = L-leucyl-tRNA(Leu) + AMP + diphosphate. The protein is Leucine--tRNA ligase of Cereibacter sphaeroides (strain KD131 / KCTC 12085) (Rhodobacter sphaeroides).